A 444-amino-acid chain; its full sequence is Histidinol dehydrogenase (444 aa).

Positions 135, 199, and 227 each coordinate NAD(+). Substrate contacts are provided by T250, Q272, and H275. Q272 and H275 together coordinate Zn(2+). Active-site proton acceptor residues include E341 and H342. Substrate contacts are provided by H342, D375, E429, and H434. Zn(2+) is bound at residue D375. H434 serves as a coordination point for Zn(2+).

Belongs to the histidinol dehydrogenase family. The cofactor is Zn(2+).

It carries out the reaction L-histidinol + 2 NAD(+) + H2O = L-histidine + 2 NADH + 3 H(+). It participates in amino-acid biosynthesis; L-histidine biosynthesis; L-histidine from 5-phospho-alpha-D-ribose 1-diphosphate: step 9/9. Catalyzes the sequential NAD-dependent oxidations of L-histidinol to L-histidinaldehyde and then to L-histidine. This is Histidinol dehydrogenase (hisD) from Mycobacterium bovis (strain ATCC BAA-935 / AF2122/97).